The chain runs to 217 residues: Insulin-like growth factor 2.L (217 aa).

The first 56 residues, 1–56 (MEQLSCKHRSSSMEAEAQLCRQTESRSTQLPRMSVMRHLFLLSITFLVYTLDSAKA), serve as a signal peptide directing secretion. Residues 57–83 (YRPTETLCGGELVDTLQFVCGDRGFYF) are b. 3 disulfides stabilise this stretch: cysteine 64–cysteine 103, cysteine 76–cysteine 116, and cysteine 102–cysteine 107. Positions 84–96 (STNNGRSNRRSNR) are c. The segment at 97-117 (GIVEECCFRSCDLELLETYCA) is a. Residues 118–123 (KPSKNE) are d. Residues 124 to 217 (RDVSTAPATA…LQQTSEPSHN (94 aa)) constitute a propeptide, e peptide.

The protein belongs to the insulin family.

The protein resides in the secreted. Functionally, the insulin-like growth factors, isolated from plasma, are structurally and functionally related to insulin but have a much higher growth-promoting activity. Promotes anterior neural development. Acts as a ligand for integrin which is required for IGF2 signaling. The sequence is that of Insulin-like growth factor 2.L from Xenopus laevis (African clawed frog).